A 249-amino-acid chain; its full sequence is Cytoplasmic envelopment protein 1 (249 aa).

The protein belongs to the herpesviridae cytoplasmic envelopment protein 1 family.

It is found in the virion. The protein resides in the virion tegument. It localises to the host cytoplasm. Its subcellular location is the host Golgi apparatus. Plays a critical role in cytoplasmic virus egress. Participates in the final step of tegumentation and envelope acquisition within the host cytoplasm. This is Cytoplasmic envelopment protein 1 (UL103) from Homo sapiens (Human).